We begin with the raw amino-acid sequence, 417 residues long: Serine/threonine-protein kinase SBK1 (417 aa).

A Protein kinase domain is found at Tyr-53–Thr-318. Residues Leu-59–Val-67 and Lys-82 contribute to the ATP site. Asp-174 functions as the Proton acceptor in the catalytic mechanism. Positions Leu-321–Gly-405 are disordered. The span at Pro-363–Val-382 shows a compositional bias: pro residues.

Belongs to the protein kinase superfamily. Ser/Thr protein kinase family.

The protein resides in the cytoplasm. The enzyme catalyses L-seryl-[protein] + ATP = O-phospho-L-seryl-[protein] + ADP + H(+). It carries out the reaction L-threonyl-[protein] + ATP = O-phospho-L-threonyl-[protein] + ADP + H(+). Functionally, may be involved in signal-transduction pathways related to the control of brain development. The sequence is that of Serine/threonine-protein kinase SBK1 (Sbk1) from Mus musculus (Mouse).